Reading from the N-terminus, the 144-residue chain is Small ribosomal subunit protein bS6 (144 aa).

Positions 95–144 (PVTTPSPMMQDDKSKPDENSRGTAAPTVNVADDSASGAQVVAAEENDTQS) are disordered. The span at 104 to 114 (QDDKSKPDENS) shows a compositional bias: basic and acidic residues.

It belongs to the bacterial ribosomal protein bS6 family.

Binds together with bS18 to 16S ribosomal RNA. The sequence is that of Small ribosomal subunit protein bS6 from Nitrosomonas eutropha (strain DSM 101675 / C91 / Nm57).